A 140-amino-acid polypeptide reads, in one-letter code: Profilin (140 aa).

Ser2 carries the post-translational modification N-acetylserine.

This sequence belongs to the profilin family. As to quaternary structure, occurs in many kinds of cells as a complex with monomeric actin in a 1:1 ratio.

The protein resides in the cytoplasm. It localises to the cytoskeleton. Functionally, binds to actin and affects the structure of the cytoskeleton. At high concentrations, profilin prevents the polymerization of actin, whereas it enhances it at low concentrations. By binding to PIP2, it inhibits the formation of IP3 and DG. The protein is Profilin of Heliocidaris crassispina (Sea urchin).